The primary structure comprises 308 residues: Glycine--tRNA ligase alpha subunit (308 aa).

It belongs to the class-II aminoacyl-tRNA synthetase family. In terms of assembly, tetramer of two alpha and two beta subunits.

Its subcellular location is the cytoplasm. The enzyme catalyses tRNA(Gly) + glycine + ATP = glycyl-tRNA(Gly) + AMP + diphosphate. The protein is Glycine--tRNA ligase alpha subunit of Streptococcus pyogenes serotype M3 (strain SSI-1).